The primary structure comprises 338 residues: tRNA N6-adenosine threonylcarbamoyltransferase (338 aa).

Positions 111 and 115 each coordinate Fe cation. Residues 134-138 (LVSGG), aspartate 167, glycine 180, and asparagine 272 contribute to the substrate site. Residue aspartate 300 participates in Fe cation binding.

Belongs to the KAE1 / TsaD family. The cofactor is Fe(2+).

It localises to the cytoplasm. It carries out the reaction L-threonylcarbamoyladenylate + adenosine(37) in tRNA = N(6)-L-threonylcarbamoyladenosine(37) in tRNA + AMP + H(+). In terms of biological role, required for the formation of a threonylcarbamoyl group on adenosine at position 37 (t(6)A37) in tRNAs that read codons beginning with adenine. Is involved in the transfer of the threonylcarbamoyl moiety of threonylcarbamoyl-AMP (TC-AMP) to the N6 group of A37, together with TsaE and TsaB. TsaD likely plays a direct catalytic role in this reaction. The protein is tRNA N6-adenosine threonylcarbamoyltransferase of Aliivibrio fischeri (strain MJ11) (Vibrio fischeri).